The sequence spans 66 residues: ISGKELQEMSTEGSKYVNKEIKNALKEVLQIKLVMEQGREQSSVMNVMPFPLLEPLNFHDVFQPFY.

It belongs to the clusterin family. As to quaternary structure, antiparallel disulfide-linked heterodimer of an alpha chain and a beta chain. Self-associates and forms higher oligomers. Interacts with a broad range of misfolded proteins, including APP, APOC2 and LYZ. Slightly acidic pH promotes interaction with misfolded proteins. Forms high-molecular weight oligomers upon interaction with misfolded proteins. Interacts with APOA1, LRP2, CLUAP1 and PON1. Interacts with the complement membrane attack complex. Interacts (via alpha chain) with XRCC6. Interacts with SYVN1, COMMD1, BTRC, CUL1 and with ubiquitin and SCF (SKP1-CUL1-F-box protein) E3 ubiquitin-protein ligase complexes. Interacts (via alpha chain) with BAX in stressed cells, where BAX undergoes a conformation change leading to association with the mitochondrial membrane. Does not interact with BAX in unstressed cells. Found in a complex with LTF, CLU, EPPIN and SEMG1. Interacts (immaturely glycosylated pre-secreted form) with HSPA5; this interaction promotes CLU stability and facilitates stress-induced CLU retrotranslocation from the secretory pathway to the mitochondria, thereby reducing stress-induced apoptosis by stabilizing mitochondrial membrane integrity. Interacts with BCL2L1; this interaction releases and activates BAX and promotes cell death. Interacts with TGFBR2 and ACVR1. Interacts (secreted form) with STMN3; this interaction may act as an important modulator during neuronal differentiation. Component of a epididymal complex at least composed of soluble form of prion protein PRNP, CLU, BPI, CES5A, MANBA and GLB1. Proteolytically cleaved on its way through the secretory system, probably within the Golgi lumen. Proteolytic cleavage is not necessary for its chaperone activity. All non-secreted forms are not proteolytically cleaved. Chaperone activity of uncleaved forms is dependent on a non-reducing environment. In terms of processing, polyubiquitinated, leading to proteasomal degradation. Under cellular stress, the intracellular level of cleaved form is reduced due to proteasomal degradation. Post-translationally, heavily N-glycosylated. About 30% of the protein mass is comprised of complex N-linked carbohydrate. Endoplasmic reticulum (ER) stress induces changes in glycosylation status and increases level of hypoglycosylated forms. Core carbohydrates are essential for chaperone activity. Non-secreted forms are hypoglycosylated or unglycosylated.

It is found in the secreted. The protein resides in the nucleus. Its subcellular location is the cytoplasm. It localises to the mitochondrion membrane. The protein localises to the cytosol. It is found in the microsome. The protein resides in the endoplasmic reticulum. Its subcellular location is the mitochondrion. It localises to the perinuclear region. The protein localises to the cytoplasmic vesicle. It is found in the secretory vesicle. The protein resides in the chromaffin granule. Functionally, functions as extracellular chaperone that prevents aggregation of non native proteins. Prevents stress-induced aggregation of blood plasma proteins. Inhibits formation of amyloid fibrils by APP, APOC2, B2M, CALCA, CSN3, SNCA and aggregation-prone LYZ variants (in vitro). Does not require ATP. Maintains partially unfolded proteins in a state appropriate for subsequent refolding by other chaperones, such as HSPA8/HSC70. Does not refold proteins by itself. Binding to cell surface receptors triggers internalization of the chaperone-client complex and subsequent lysosomal or proteasomal degradation. When secreted, protects cells against apoptosis and against cytolysis by complement: inhibits assembly of the complement membrane attack complex (MAC) by preventing polymerization of C9 pore component of the MAC complex. Intracellular forms interact with ubiquitin and SCF (SKP1-CUL1-F-box protein) E3 ubiquitin-protein ligase complexes and promote the ubiquitination and subsequent proteasomal degradation of target proteins. Promotes proteasomal degradation of COMMD1 and IKBKB. Modulates NF-kappa-B transcriptional activity. Following stress, promotes apoptosis. Inhibits apoptosis when associated with the mitochondrial membrane by interference with BAX-dependent release of cytochrome c into the cytoplasm. Plays a role in the regulation of cell proliferation. An intracellular form suppresses stress-induced apoptosis by stabilizing mitochondrial membrane integrity through interaction with HSPA5. Secreted form does not affect caspase or BAX-mediated intrinsic apoptosis and TNF-induced NF-kappa-B-activity. Secreted form act as an important modulator during neuronal differentiation through interaction with STMN3. Plays a role in the clearance of immune complexes that arise during cell injury. This is Clusterin (CLU) from Ovis aries (Sheep).